The sequence spans 139 residues: Putative truncated protein trichome birefringence-like 46 (139 aa).

It belongs to the PC-esterase family. TBL subfamily.

The chain is Putative truncated protein trichome birefringence-like 46 (TBL46) from Arabidopsis thaliana (Mouse-ear cress).